The primary structure comprises 524 residues: Glutamyl-tRNA(Gln) amidotransferase subunit A, mitochondrial (524 aa).

Residues Lys-76 and Ser-171 each act as charge relay system in the active site. Ser-195 (acyl-ester intermediate) is an active-site residue.

This sequence belongs to the amidase family. GatA subfamily. In terms of assembly, subunit of the heterotrimeric GatCAB amidotransferase (AdT) complex, composed of A (qrsl1), B (gatb) and C (gatc) subunits.

Its subcellular location is the mitochondrion. It carries out the reaction L-glutamyl-tRNA(Gln) + L-glutamine + ATP + H2O = L-glutaminyl-tRNA(Gln) + L-glutamate + ADP + phosphate + H(+). Its function is as follows. Allows the formation of correctly charged Gln-tRNA(Gln) through the transamidation of misacylated Glu-tRNA(Gln) in the mitochondria. The reaction takes place in the presence of glutamine and ATP through an activated gamma-phospho-Glu-tRNA(Gln). This Xenopus laevis (African clawed frog) protein is Glutamyl-tRNA(Gln) amidotransferase subunit A, mitochondrial (qrsl1).